The chain runs to 259 residues: Keratin-associated protein 10-8 (259 aa).

The segment at 26 to 243 (HVSRVSSPST…SCQPSCCHPA (218 aa)) is 19 X 5 AA repeats of C-C-X(3). 19 tandem repeats follow at residues 50-54 (CCEPR), 60-64 (CCTPS), 65-69 (CCAPA), 98-102 (CCQQS), 108-112 (CCTSS), 118-122 (CCVPV), 123-127 (CCKSN), 133-137 (CCVSI), 145-149 (CCQQS), 155-159 (CCTFS), 165-169 (CCVPI), 170-174 (CCKPI), 175-179 (CCVPV), 187-191 (CCQKS), 197-201 (CCTTS), 202-206 (CCRPS), 221-225 (CCVPV), 228-232 (CCVPA), and 239-243 (CCHPA).

This sequence belongs to the KRTAP type 10 family. Interacts with hair keratins. Restricted to a narrow region of the hair fiber cuticle, lying approximately 20 cell layers above the apex of the dermal papilla of the hair root; not detected in any other tissues.

Its function is as follows. In the hair cortex, hair keratin intermediate filaments are embedded in an interfilamentous matrix, consisting of hair keratin-associated proteins (KRTAP), which are essential for the formation of a rigid and resistant hair shaft through their extensive disulfide bond cross-linking with abundant cysteine residues of hair keratins. The matrix proteins include the high-sulfur and high-glycine-tyrosine keratins. This Homo sapiens (Human) protein is Keratin-associated protein 10-8 (KRTAP10-8).